A 341-amino-acid chain; its full sequence is Methionine import ATP-binding protein MetN 2 (341 aa).

In terms of domain architecture, ABC transporter spans 2 to 241 (IELKEVVKEY…PQHAVTKRFV (240 aa)). 38 to 45 (GFSGAGKS) is an ATP binding site.

Belongs to the ABC transporter superfamily. Methionine importer (TC 3.A.1.24) family. The complex is composed of two ATP-binding proteins (MetN), two transmembrane proteins (MetI) and a solute-binding protein (MetQ).

The protein localises to the cell membrane. The enzyme catalyses L-methionine(out) + ATP + H2O = L-methionine(in) + ADP + phosphate + H(+). It carries out the reaction D-methionine(out) + ATP + H2O = D-methionine(in) + ADP + phosphate + H(+). In terms of biological role, part of the ABC transporter complex MetNIQ involved in methionine import. Responsible for energy coupling to the transport system. The chain is Methionine import ATP-binding protein MetN 2 from Staphylococcus aureus (strain MRSA252).